The sequence spans 118 residues: Large ribosomal subunit protein uL18 (118 aa).

Belongs to the universal ribosomal protein uL18 family. Part of the 50S ribosomal subunit; part of the 5S rRNA/L5/L18/L25 subcomplex. Contacts the 5S and 23S rRNAs.

Its function is as follows. This is one of the proteins that bind and probably mediate the attachment of the 5S RNA into the large ribosomal subunit, where it forms part of the central protuberance. In Rickettsia bellii (strain OSU 85-389), this protein is Large ribosomal subunit protein uL18.